The following is a 359-amino-acid chain: Endoglucanase (359 aa).

Positions 1-23 (MPLRALVAVIVTTAVMLVPRAWA) are cleaved as a signal peptide. E53 functions as the Proton donor in the catalytic mechanism. Catalysis depends on D110, which acts as the Nucleophile.

This sequence belongs to the glycosyl hydrolase 8 (cellulase D) family.

The catalysed reaction is Endohydrolysis of (1-&gt;4)-beta-D-glucosidic linkages in cellulose, lichenin and cereal beta-D-glucans.. In terms of biological role, the biological conversion of cellulose to glucose generally requires three types of hydrolytic enzymes: (1) Endoglucanases which cut internal beta-1,4-glucosidic bonds; (2) Exocellobiohydrolases that cut the disaccharide cellobiose from the non-reducing end of the cellulose polymer chain; (3) Beta-1,4-glucosidases which hydrolyze the cellobiose and other short cello-oligosaccharides to glucose. The polypeptide is Endoglucanase (Cellulomonas uda).